A 337-amino-acid chain; its full sequence is Peroxidase 14 (337 aa).

A signal peptide spans 1–22 (MARIGSFLILLSLTYALTLCIC). The N-linked (GlcNAc...) asparagine glycan is linked to Asn-24. 4 disulfides stabilise this stretch: Cys-44/Cys-124, Cys-77/Cys-82, Cys-130/Cys-331, and Cys-209/Cys-241. The active-site Proton acceptor is His-75. Asp-76, Val-79, Gly-81, Asp-83, and Ser-85 together coordinate Ca(2+). Residue Pro-172 coordinates substrate. Asn-191 carries an N-linked (GlcNAc...) asparagine glycan. His-202 serves as a coordination point for heme b. Residue Thr-203 participates in Ca(2+) binding. N-linked (GlcNAc...) asparagine glycans are attached at residues Asn-218 and Asn-249. Ca(2+) is bound by residues Asp-254, Ser-257, and Asp-262.

It belongs to the peroxidase family. Classical plant (class III) peroxidase subfamily. Heme b is required as a cofactor. It depends on Ca(2+) as a cofactor.

The protein localises to the secreted. The catalysed reaction is 2 a phenolic donor + H2O2 = 2 a phenolic radical donor + 2 H2O. Removal of H(2)O(2), oxidation of toxic reductants, biosynthesis and degradation of lignin, suberization, auxin catabolism, response to environmental stresses such as wounding, pathogen attack and oxidative stress. These functions might be dependent on each isozyme/isoform in each plant tissue. The chain is Peroxidase 14 (PER14) from Arabidopsis thaliana (Mouse-ear cress).